The following is an 84-amino-acid chain: RQC P-site tRNA stabilizing factor (84 aa).

An S4 RNA-binding domain is found at 1–64 (MRIDKFLQSV…IEEYTILQIP (64 aa)).

The protein belongs to the RqcP family. Associates with stalled 50S ribosomal subunits. Binds to RqcH, 23S rRNA and the P-site tRNA. Does not require RqcH for association with 50S subunits.

Key component of the ribosome quality control system (RQC), a ribosome-associated complex that mediates the extraction of incompletely synthesized nascent chains from stalled ribosomes and their subsequent degradation. RqcH recruits Ala-charged tRNA, and with RqcP directs the elongation of stalled nascent chains on 50S ribosomal subunits, leading to non-templated C-terminal alanine extensions (Ala tail). The Ala tail promotes nascent chain degradation. RqcP is associated with the translocation-like movement of the peptidyl-tRNA from the A-site into the P-site. The polypeptide is RQC P-site tRNA stabilizing factor (Helicobacter pylori (strain ATCC 700392 / 26695) (Campylobacter pylori)).